The primary structure comprises 267 residues: Centromere protein Q (267 aa).

2 stretches are compositionally biased toward basic residues: residues 1–22 (MSGKARASRKKPQQVKRSLKQR) and 39–49 (KRNRSHAKHLS). The disordered stretch occupies residues 1-54 (MSGKARASRKKPQQVKRSLKQRANKEADLPENEVGNTAKRNRSHAKHLSSKVTG). Position 49 is a phosphoserine (serine 49). A coiled-coil region spans residues 100–202 (IKRKEEIQCH…EEQEVKQVFH (103 aa)).

Belongs to the CENP-Q/OKP1 family. Component of the CENPA-CAD complex, composed of CENPI, CENPK, CENPL, CENPO, CENPP, CENPQ, CENPR and CENPS. The CENPA-CAD complex interacts with the CENPA-NAC complex, at least composed of CENPA, CENPC, CENPH, CENPM, CENPN, CENPT and CENPU. In terms of processing, phosphorylation at Ser-49 is essential for CENPE recruitment to kinetochores and orderly chromosome congression.

It is found in the nucleus. Its subcellular location is the chromosome. The protein resides in the centromere. Component of the CENPA-CAD (nucleosome distal) complex, a complex recruited to centromeres which is involved in assembly of kinetochore proteins, mitotic progression and chromosome segregation. May be involved in incorporation of newly synthesized CENPA into centromeres via its interaction with the CENPA-NAC complex. Plays an important role in chromosome congression and in the recruitment of CENP-O complex (which comprises CENPO, CENPP, CENPQ and CENPU), CENPE and PLK1 to the kinetochores. This is Centromere protein Q (Cenpq) from Mus musculus (Mouse).